The chain runs to 156 residues: S-ribosylhomocysteine lyase (156 aa).

Fe cation-binding residues include His-56, His-60, and Cys-123.

Belongs to the LuxS family. Homodimer. Fe cation serves as cofactor.

It catalyses the reaction S-(5-deoxy-D-ribos-5-yl)-L-homocysteine = (S)-4,5-dihydroxypentane-2,3-dione + L-homocysteine. Functionally, involved in the synthesis of autoinducer 2 (AI-2) which is secreted by bacteria and is used to communicate both the cell density and the metabolic potential of the environment. The regulation of gene expression in response to changes in cell density is called quorum sensing. Catalyzes the transformation of S-ribosylhomocysteine (RHC) to homocysteine (HC) and 4,5-dihydroxy-2,3-pentadione (DPD). The sequence is that of S-ribosylhomocysteine lyase from Staphylococcus saprophyticus subsp. saprophyticus (strain ATCC 15305 / DSM 20229 / NCIMB 8711 / NCTC 7292 / S-41).